Consider the following 346-residue polypeptide: Retinal homeobox protein Rx (346 aa).

The Octapeptide motif signature appears at 33–40; sequence HSIEAILG. Disordered stretches follow at residues 46–145 and 194–318; these read GILG…TFTT and QEKL…LDEA. Residues 55 to 67 are compositionally biased toward basic and acidic residues; the sequence is RGARGAKERDRRL. The span at 83–92 shows a compositional bias: pro residues; it reads PSPPPAPAPA. A DNA-binding region (homeobox) is located at residues 136–195; that stretch reads HRRNRTTFTTYQLHELERAFEKSHYPDVYSREELAGKVNLPEVRVQVWFQNRRAKWRRQE. Residues 207–225 show a composition bias toward low complexity; it reads SPLLSFSRSPPSATLSPLG. The span at 226–236 shows a compositional bias: gly residues; that stretch reads AGPGSGGGPAG. Residues 237-246 show a composition bias toward low complexity; sequence GALPLESWLG. The segment covering 274–304 has biased composition (pro residues); sequence YTPPPPPPPFLNSPPLGPGLQPLAPPPPSYP. The short motif at 323-336 is the OAR element; sequence SSIAALRLKAKEHI. A Nuclear localization signal motif is present at residues 329-333; the sequence is RLKAK.

It belongs to the paired homeobox family. Bicoid subfamily. Expressed in the developing eye and weakly expressed in the adult retina.

It localises to the nucleus. Plays a critical role in eye formation by regulating the initial specification of retinal cells and/or their subsequent proliferation. Binds to the photoreceptor conserved element-I (PCE-1/Ret 1) in the photoreceptor cell-specific arrestin promoter. The polypeptide is Retinal homeobox protein Rx (RAX) (Homo sapiens (Human)).